The primary structure comprises 272 residues: Replication-associated protein A (272 aa).

The region spanning 11–114 (SHRNANTFLT…PLAVFERGTF (104 aa)) is the CRESS-DNA virus Rep endonuclease domain. Residues 18 to 21 (FLTY) carry the RCR-1 motif. Residues Glu52, His60, and His62 each coordinate a divalent metal cation. Positions 60–62 (HLH) match the RCR-2 motif. Residue Tyr100 is the For DNA cleavage activity of the active site. The short motif at 100–103 (YILK) is the RCR-3 element. Glu104 contacts a divalent metal cation. The tract at residues 175–187 (SANKLFPEIQEEF) is oligomerization. The binding to RBR1 stretch occupies residues 198–202 (LLCNE). The tract at residues 221 to 230 (MLLQPTCYTL) is transactivation. The disordered stretch occupies residues 245 to 272 (SHQMKDQESRASTSSAQQEPENLLGPEA). Residues 254-264 (RASTSSAQQEP) show a composition bias toward polar residues.

It belongs to the geminiviridae Rep protein family. As to quaternary structure, homooligomer. Interacts with host retinoblastoma-related protein 1 (RBR1), and may thereby deregulate the host cell cycle. Part of the C- and V-complexes which are RepA-Rep-DNA complexes involved in the c-sense and v-sense transcription. It depends on Mg(2+) as a cofactor. Mn(2+) is required as a cofactor.

The protein resides in the host nucleus. Its subcellular location is the host cytoplasm. Implicated in enhancement of V-sense gene expression. Acts a an inhibitor of C-sense gene transcription. The sequence is that of Replication-associated protein A from Maize streak virus genotype A (isolate Nigeria) (MSV).